The primary structure comprises 216 residues: Small ribosomal subunit protein uS3 (216 aa).

The region spanning 38–106 (IRGYLKKKLY…EIIINILEVR (69 aa)) is the KH type-2 domain.

This sequence belongs to the universal ribosomal protein uS3 family. Part of the 30S ribosomal subunit. Forms a tight complex with proteins S10 and S14.

In terms of biological role, binds the lower part of the 30S subunit head. Binds mRNA in the 70S ribosome, positioning it for translation. This chain is Small ribosomal subunit protein uS3, found in Syntrophus aciditrophicus (strain SB).